A 224-amino-acid polypeptide reads, in one-letter code: MISWLKGEKVHTWKISSRKGVVLNVGGVGYEIQLLPKQIDKAEVLNEFELWIHQIDREDGTSLYGFIEVNQRDLFREIISVNGIGPQIGMAMLEEFEVPQLVNAIENKESNLLTKTQGIGKRIAERLIVELRNKLQRFTDNDKTIHENKKGIEANQFSKYIDEIYLILNSLGYVDNEIKESIKIITINEKENSLLLNSSSAEEKAELMDKHLKEILMKLSEKTT.

Residues 1–67 (MISWLKGEKV…EDGTSLYGFI (67 aa)) are domain I. The segment at 68 to 146 (EVNQRDLFRE…RFTDNDKTIH (79 aa)) is domain II. Residues 147–155 (ENKKGIEAN) form a flexible linker region. Positions 156–224 (QFSKYIDEIY…ILMKLSEKTT (69 aa)) are domain III.

It belongs to the RuvA family. In terms of assembly, homotetramer. Forms an RuvA(8)-RuvB(12)-Holliday junction (HJ) complex. HJ DNA is sandwiched between 2 RuvA tetramers; dsDNA enters through RuvA and exits via RuvB. An RuvB hexamer assembles on each DNA strand where it exits the tetramer. Each RuvB hexamer is contacted by two RuvA subunits (via domain III) on 2 adjacent RuvB subunits; this complex drives branch migration. In the full resolvosome a probable DNA-RuvA(4)-RuvB(12)-RuvC(2) complex forms which resolves the HJ.

It is found in the cytoplasm. In terms of biological role, the RuvA-RuvB-RuvC complex processes Holliday junction (HJ) DNA during genetic recombination and DNA repair, while the RuvA-RuvB complex plays an important role in the rescue of blocked DNA replication forks via replication fork reversal (RFR). RuvA specifically binds to HJ cruciform DNA, conferring on it an open structure. The RuvB hexamer acts as an ATP-dependent pump, pulling dsDNA into and through the RuvAB complex. HJ branch migration allows RuvC to scan DNA until it finds its consensus sequence, where it cleaves and resolves the cruciform DNA. The protein is Holliday junction branch migration complex subunit RuvA of Prochlorococcus marinus (strain NATL1A).